Consider the following 129-residue polypeptide: Small ribosomal subunit protein uS8 (129 aa).

Belongs to the universal ribosomal protein uS8 family. As to quaternary structure, part of the 30S ribosomal subunit.

Functionally, one of the primary rRNA binding proteins, it binds directly to 16S rRNA central domain where it helps coordinate assembly of the platform of the 30S subunit. The polypeptide is Small ribosomal subunit protein uS8 (Thermoplasma acidophilum (strain ATCC 25905 / DSM 1728 / JCM 9062 / NBRC 15155 / AMRC-C165)).